We begin with the raw amino-acid sequence, 264 residues long: Transcription initiation factor TFIID subunit 9 (264 aa).

K5 is modified (N6-acetyllysine). Phosphoserine is present on residues S149, S152, S155, and S158. The segment at 150–174 is disordered; it reads VGSVSSRPSTPTLGTPTPQAMSVST. A compositionally biased stretch (polar residues) spans 151–174; that stretch reads GSVSSRPSTPTLGTPTPQAMSVST. 4 positions are modified to phosphothreonine: T159, T161, T164, and T178. A phosphoserine mark is found at S181 and S196. A disordered region spans residues 233–264; that stretch reads QNTANESANALKRKREEEDDDDDDDDDDYDNL. Positions 249–264 are enriched in acidic residues; the sequence is EEDDDDDDDDDDYDNL.

The protein belongs to the TAF9 family. Component of the TFIID basal transcription factor complex, composed of TATA-box-binding protein TBP, and a number of TBP-associated factors (TAFs), including TAF1, TAF2, TAF3, TAF4, TAF5, TAF6, TAF7, TAF8, TAF9, TAF10, TAF11, TAF12 and TAF13. Component of the TATA-binding protein-free TAF complex (TFTC), the PCAF histone acetylase complex and the STAGA transcription coactivator-HAT complex. The PCAF complex consists at least of TADA2L/ADA2, SUPT3H/SPT3, TADA3L/ADA3, TAF5L/PAF65-beta, TAF6L/PAF65-alpha, TAF10/TAFII30, TAF12/TAFII20, TAF9/TAFII31 and TRRAP. The STAGA transcription coactivator-HAT complex consists at least of SUPT3H, GCN5L2, SUPT7L, TAF5L, TAF6L, TADA3L, TAD1L, TAF10, TAF12, TRRAP and TAF9. Binds N-terminal domain of p53/TP53 which is essential for transcription. Component of some MLL1/MLL complex, at least composed of the core components KMT2A/MLL1, ASH2L, HCFC1/HCF1, WDR5 and RBBP5, as well as the facultative components BACC1, CHD8, E2F6, HSP70, INO80C, KANSL1, LAS1L, MAX, MCRS1, MGA, MYST1/MOF, PELP1, PHF20, PRP31, RING2, RUVB1/TIP49A, RUVB2/TIP49B, SENP3, TAF1, TAF4, TAF6, TAF7, TAF9 and TEX10. Binds TFIIB and the Herpes simplex virus activator VP16. Forms a heterodimer with TAF6 in a complex with the TAF4B-TAF12 heterodimer. Also interacts with TAF5. Binds directly DNA. Increased DNA binding when complexed with TAF6.

It localises to the nucleus. Functionally, the TFIID basal transcription factor complex plays a major role in the initiation of RNA polymerase II (Pol II)-dependent transcription. TFIID recognizes and binds promoters with or without a TATA box via its subunit TBP, a TATA-box-binding protein, and promotes assembly of the pre-initiation complex (PIC). The TFIID complex consists of TBP and TBP-associated factors (TAFs), including TAF1, TAF2, TAF3, TAF4, TAF5, TAF6, TAF7, TAF8, TAF9, TAF10, TAF11, TAF12 and TAF13. TAF9 is also a component of the TBP-free TAFII complex (TFTC), the PCAF histone acetylase complex and the STAGA transcription coactivator-HAT complex. TAF9 and its paralog TAF9B are involved in transcriptional activation as well as repression of distinct but overlapping sets of genes. Essential for cell viability. May have a role in gene regulation associated with apoptosis. The sequence is that of Transcription initiation factor TFIID subunit 9 from Rattus norvegicus (Rat).